The chain runs to 160 residues: Leucokinin (160 aa).

The signal sequence occupies residues 1–19; sequence MAKIVLCMVLLAFGRQVYG. The propeptide occupies 20–130; that stretch reads ASLVPAPISE…RIKSQLQRDE (111 aa). Position 147 is a glycine amide (Gly-147). Positions 151 to 160 are excised as a propeptide; that stretch reads SPEPPILPDY.

Its subcellular location is the secreted. Functionally, acts through intracellular calcium in Malpighian tubule stellate cells to raise chloride conductance. This Drosophila melanogaster (Fruit fly) protein is Leucokinin (Lk).